Reading from the N-terminus, the 399-residue chain is Zinc finger HIT domain-containing protein 2 (399 aa).

Met-1 bears the N-acetylmethionine mark. Positions 7, 10, 22, 25, 30, 34, 38, and 41 each coordinate Zn(2+). Residues 7–41 form an HIT-type zinc finger; the sequence is CGFCPAGEALPARYTCPRCNAPYCSLRCYRAHGAC. Disordered stretches follow at residues 70 to 97 and 152 to 175; these read RLRE…GLSG and AEPE…AEPF. Residues 86-96 show a composition bias toward gly residues; that stretch reads LGPGARPGGLS. Thr-161 is modified (phosphothreonine).

In terms of assembly, interacts (via HIT-type zinc finger) with RUVBL2 in the presence of ATP or ADP; shows a stronger interaction in the presence of ADP. Low expression in most tissues; highly expressed in testis; particularly in seminiferous tubules.

In terms of biological role, may act as a bridging factor mediating the interaction between the R2TP/Prefoldin-like (R2TP/PFDL) complex and U5 small nuclear ribonucleoprotein (U5 snRNP). Required for the interaction of R2TP complex subunit RPAP3 and prefoldin-like subunit URI1 with U5 snRNP proteins EFTUD2 and PRPF8. May play a role in regulating the composition of the U5 snRNP complex. The polypeptide is Zinc finger HIT domain-containing protein 2 (Znhit2) (Mus musculus (Mouse)).